We begin with the raw amino-acid sequence, 501 residues long: MTDDKTTPARASAKLPRGFGDRGPAEIAATEKMLAAIRASYELYGFEAVETPFIEFTDALGKFLPDLDRPNEGVFSFKDDDESWLSLRYDLTAPLARFVAENFDKLPKPYRSYRAGYVFRNEKPGPGRFRQFMQFDADTVGAPSVAADAEMCMMAADTLERLGVKRGDYVIKVNNRKVLDGVLEAIGLGGEENAGRRMTVLRAIDKLDKFGPEGVALLLGPGRKDESGDFTKGAGLERTAVERVLNYVAAQGEGTAQMLGVLRASVAGSQRGEEGVAELAEIAALIDAAGFSARIRIDPSVVRGLEYYTGPVFEAELTFEVQGEDGKPVRFGSIGGGGRYDGLVGRFRGENVPATGFSIGVSRLYSALKAVGSPIVSAASQPGPVVVLVLDREHLARYQGFVTALRSADIRAELYLGGSGMNAQLKYADKRGSLCAVIQGSNERDHAEGARVTIRDLALGAELAGASKDRADYLELRAKAQFTVAEQNLVDAVREVMARRS.

Belongs to the class-II aminoacyl-tRNA synthetase family. Homodimer.

The protein localises to the cytoplasm. It carries out the reaction tRNA(His) + L-histidine + ATP = L-histidyl-tRNA(His) + AMP + diphosphate + H(+). This Methylocella silvestris (strain DSM 15510 / CIP 108128 / LMG 27833 / NCIMB 13906 / BL2) protein is Histidine--tRNA ligase.